A 731-amino-acid chain; its full sequence is Dynein axonemal intermediate chain 7 (731 aa).

2 disordered regions span residues 1-50 (MPPK…NERL) and 285-320 (QNTESSAAVHNGKMEGERDESESSKQVDECHSVRSE). Composition is skewed to basic and acidic residues over residues 17–50 (KAEKERLQREEEEKRQREAEEARLIAEREENERL) and 296–320 (GKMEGERDESESSKQVDECHSVRSE).

It belongs to the DNAI7 family. As to quaternary structure, part of the multisubunit axonemal dynein complex formed at least of two heavy chains and a number of intermediate and light chains.

The protein resides in the cell projection. It localises to the cilium. Its subcellular location is the cytoplasm. Its function is as follows. Via its association with the multisubunit axonemal dynein complex, may be potentially involved in the regulation of cilia function. This is Dynein axonemal intermediate chain 7 (dnai7) from Danio rerio (Zebrafish).